The sequence spans 520 residues: Eukaryotic translation initiation factor 3 subunit L (520 aa).

The PCI domain maps to 278–478 (FATYYYVGIC…ELDIALENDL (201 aa)).

This sequence belongs to the eIF-3 subunit L family. Component of the eukaryotic translation initiation factor 3 (eIF-3) complex.

It localises to the cytoplasm. Component of the eukaryotic translation initiation factor 3 (eIF-3) complex, which is involved in protein synthesis of a specialized repertoire of mRNAs and, together with other initiation factors, stimulates binding of mRNA and methionyl-tRNAi to the 40S ribosome. The eIF-3 complex specifically targets and initiates translation of a subset of mRNAs involved in cell proliferation. This chain is Eukaryotic translation initiation factor 3 subunit L, found in Yarrowia lipolytica (strain CLIB 122 / E 150) (Yeast).